The sequence spans 229 residues: Probable transmembrane reductase CYB561D1 (229 aa).

Topologically, residues 1–24 (MHSMEVGLVPAPAREPRLTRWLRR) are cytoplasmic. The Cytochrome b561 domain occupies 22 to 224 (LRRGSGILAH…HQISSSYLPR (203 aa)). The chain crosses the membrane as a helical span at residues 25–45 (GSGILAHLIALGFTIFLTVLS). At 46 to 53 (RPGTSLFS) the chain is on the lumenal side. Residues 54 to 74 (WHPVFMALAFCLCMAEAILLF) form a helical membrane-spanning segment. His55 is a binding site for heme b. The Cytoplasmic segment spans residues 75–91 (SPEHSLFFFCSRKTRIR). A helical membrane pass occupies residues 92–112 (LHWAGQTMAILCAVLGLGFII). The heme b site is built by His93 and His127. At 113–128 (SSKIRSEMSHLVSWHS) the chain is on the lumenal side. The helical transmembrane segment at 129-149 (WIGALTLLATGGQALCGLCLL) threads the bilayer. At 150 to 169 (CPRAARVSRVARLKLYHLTC) the chain is on the cytoplasmic side. His166 lines the heme b pocket. Residues 170-190 (GLVVYLMATVTVLLGMYSVWF) form a helical membrane-spanning segment. The Lumenal portion of the chain corresponds to 191–193 (QAQ). A helical transmembrane segment spans residues 194-214 (IKGTAWYLCLGLPLYPALVIM). Over 215-229 (HQISSSYLPRKKVEI) the chain is Cytoplasmic.

It depends on heme b as a cofactor.

The protein resides in the membrane. It carries out the reaction monodehydro-L-ascorbate radical(out) + L-ascorbate(in) = monodehydro-L-ascorbate radical(in) + L-ascorbate(out). It catalyses the reaction Fe(3+)(out) + L-ascorbate(in) = monodehydro-L-ascorbate radical(in) + Fe(2+)(out) + H(+). In terms of biological role, probable transmembrane reductase that may use ascorbate as an electron donor and transfer electrons across membranes to reduce monodehydro-L-ascorbate radical and iron cations Fe(3+) in another cellular compartment. The protein is Probable transmembrane reductase CYB561D1 of Mus musculus (Mouse).